The primary structure comprises 638 residues: MPNITLPDGSVRSFDHPVTVSEVASSIGAGLAKAALAGKVDGRLVDLSYRIEADTPLAIVTEKGDEGLDVIRHSTAHLLAHAVKELFPEAQVTIGPVIENGFYYDFAYKRPFTPEDLEKIEKRMAELARREIPVSREVWPRDKAVEFFKSQGEHYKAEIIASIPQAEDVSLYRQGDFIDLCRGPHVPSTGKLKVFKLTKVAGAYWRGDSKNEMLQRIYGTAWAKKDDLENYLHMLEEAEKRDHRKLGRLLDLFHIQEEAPGMVFWHAKGWTLWQQVEQYMRRTILDNGYQEVKTPQIVDRSLWEKSGHWDMYSELMFTTQSEKRDYAVKPMNCPCHIQIFNQGLKSYRDLPLRMAEFGSCHRNEPSGALHGIMRVRNFVQDDAHIFCADEQVQTEAAAFIELLQKVYADFGFTEILIKLSTRPDKRVGTDDQWDAAEAALAAALDAQGLAYDLQPGEGAFYGPKIEFSLKDCLNRVWQCGTLQLDFNLPVRLGAEYVAEDNAKHYPVMLHRAILGSLERFIGILIEHYAGALPLWLAPVHAVVLNISEGQTDYATEVARRLKQAGFRVEADLRNEKINYKIREHSVHKLPYQIVIGEKEKAAGVVAVRARGGQDLGQMPLDTLIERWQREIEARSGSI.

The 61-residue stretch at 1-61 folds into the TGS domain; sequence MPNITLPDGS…EADTPLAIVT (61 aa). The segment at 242 to 533 is catalytic; sequence DHRKLGRLLD…LIEHYAGALP (292 aa). Residues cysteine 333, histidine 384, and histidine 510 each coordinate Zn(2+).

Belongs to the class-II aminoacyl-tRNA synthetase family. Homodimer. Zn(2+) serves as cofactor.

Its subcellular location is the cytoplasm. The enzyme catalyses tRNA(Thr) + L-threonine + ATP = L-threonyl-tRNA(Thr) + AMP + diphosphate + H(+). Functionally, catalyzes the attachment of threonine to tRNA(Thr) in a two-step reaction: L-threonine is first activated by ATP to form Thr-AMP and then transferred to the acceptor end of tRNA(Thr). Also edits incorrectly charged L-seryl-tRNA(Thr). In Aromatoleum aromaticum (strain DSM 19018 / LMG 30748 / EbN1) (Azoarcus sp. (strain EbN1)), this protein is Threonine--tRNA ligase.